The following is a 125-amino-acid chain: Phosphoribosyl-AMP cyclohydrolase (125 aa).

Residue Asp74 participates in Mg(2+) binding. Cys75 lines the Zn(2+) pocket. Residues Asp76 and Asp78 each contribute to the Mg(2+) site. 2 residues coordinate Zn(2+): Cys92 and Cys99.

Belongs to the PRA-CH family. In terms of assembly, homodimer. Mg(2+) serves as cofactor. Zn(2+) is required as a cofactor.

It localises to the cytoplasm. The enzyme catalyses 1-(5-phospho-beta-D-ribosyl)-5'-AMP + H2O = 1-(5-phospho-beta-D-ribosyl)-5-[(5-phospho-beta-D-ribosylamino)methylideneamino]imidazole-4-carboxamide. The protein operates within amino-acid biosynthesis; L-histidine biosynthesis; L-histidine from 5-phospho-alpha-D-ribose 1-diphosphate: step 3/9. In terms of biological role, catalyzes the hydrolysis of the adenine ring of phosphoribosyl-AMP. The sequence is that of Phosphoribosyl-AMP cyclohydrolase from Geotalea uraniireducens (strain Rf4) (Geobacter uraniireducens).